Here is a 309-residue protein sequence, read N- to C-terminus: Ferrochelatase (309 aa).

Fe cation-binding residues include histidine 185 and glutamate 262.

The protein belongs to the ferrochelatase family.

Its subcellular location is the cytoplasm. It catalyses the reaction heme b + 2 H(+) = protoporphyrin IX + Fe(2+). It participates in porphyrin-containing compound metabolism; protoheme biosynthesis; protoheme from protoporphyrin-IX: step 1/1. In terms of biological role, catalyzes the ferrous insertion into protoporphyrin IX. This is Ferrochelatase from Campylobacter jejuni subsp. jejuni serotype O:23/36 (strain 81-176).